Here is a 397-residue protein sequence, read N- to C-terminus: CCA-adding enzyme (397 aa).

The ATP site is built by glycine 26 and arginine 29. CTP-binding residues include glycine 26 and arginine 29. Residues aspartate 39 and aspartate 41 each contribute to the Mg(2+) site. Positions 110, 153, 156, 159, and 162 each coordinate ATP. Residues arginine 110, aspartate 153, arginine 156, arginine 159, and arginine 162 each coordinate CTP.

The protein belongs to the tRNA nucleotidyltransferase/poly(A) polymerase family. Bacterial CCA-adding enzyme type 3 subfamily. As to quaternary structure, homodimer. The cofactor is Mg(2+).

The catalysed reaction is a tRNA precursor + 2 CTP + ATP = a tRNA with a 3' CCA end + 3 diphosphate. It catalyses the reaction a tRNA with a 3' CCA end + 2 CTP + ATP = a tRNA with a 3' CCACCA end + 3 diphosphate. Its function is as follows. Catalyzes the addition and repair of the essential 3'-terminal CCA sequence in tRNAs without using a nucleic acid template. Adds these three nucleotides in the order of C, C, and A to the tRNA nucleotide-73, using CTP and ATP as substrates and producing inorganic pyrophosphate. tRNA 3'-terminal CCA addition is required both for tRNA processing and repair. Also involved in tRNA surveillance by mediating tandem CCA addition to generate a CCACCA at the 3' terminus of unstable tRNAs. While stable tRNAs receive only 3'-terminal CCA, unstable tRNAs are marked with CCACCA and rapidly degraded. The polypeptide is CCA-adding enzyme (Bacillus cereus (strain 03BB102)).